The chain runs to 595 residues: TNF receptor-associated factor family protein DDB_G0272348 (595 aa).

The interval 14–64 is disordered; that stretch reads SFTNNNSNNNNNNNNNSNSNNNNNNNNNNINNNNNHNNNNKNNSNNKNEIN. The segment covering 17 to 64 has biased composition (low complexity); sequence NNNSNNNNNNNNNSNSNNNNNNNNNNINNNNNHNNNNKNNSNNKNEIN. Residues 87–134 form an RING-type; degenerate zinc finger; it reads CTICSDLLVNSFHADKFKAVQCKNGHYTTCLNCWEKHLEKKKNCIQCG. 2 consecutive TRAF-type zinc fingers follow at residues 189-253 and 254-311; these read EHLK…INKE and SHNA…SKLS. Residues 348–410 adopt a coiled-coil conformation; sequence LLNGQNKKIT…QQQQSQQQQQ (63 aa). Low complexity predominate over residues 409–440; it reads QQSQQQQQSQQSQQNNNSNSHFINNNNNNINN. Positions 409 to 450 are disordered; the sequence is QQSQQQQQSQQSQQNNNSNSHFINNNNNNINNVQMSDSPNGG. Positions 441–450 are enriched in polar residues; sequence VQMSDSPNGG. Residues 456-584 form the MATH domain; that stretch reads VYKNKWVISN…NDSITIEIEI (129 aa).

Belongs to the TNF receptor-associated factor family. A subfamily.

It localises to the cytoplasm. Probable adapter protein and signal transducer that links members of the tumor necrosis factor receptor family to different signaling pathways by association with the receptor cytoplasmic domain and kinases. This Dictyostelium discoideum (Social amoeba) protein is TNF receptor-associated factor family protein DDB_G0272348.